A 552-amino-acid chain; its full sequence is uncharacterized protein (552 aa).

A DhaL domain is found at 8-200 (KLFADMIIQG…LLCVYEGFLK (193 aa)).

This is an uncharacterized protein from Staphylococcus epidermidis (strain ATCC 35984 / DSM 28319 / BCRC 17069 / CCUG 31568 / BM 3577 / RP62A).